A 157-amino-acid polypeptide reads, in one-letter code: Small ribosomal subunit protein uS7 (157 aa).

Belongs to the universal ribosomal protein uS7 family. Part of the 30S ribosomal subunit. Contacts proteins S9 and S11.

Functionally, one of the primary rRNA binding proteins, it binds directly to 16S rRNA where it nucleates assembly of the head domain of the 30S subunit. Is located at the subunit interface close to the decoding center, probably blocks exit of the E-site tRNA. The protein is Small ribosomal subunit protein uS7 of Delftia acidovorans (strain DSM 14801 / SPH-1).